A 68-amino-acid polypeptide reads, in one-letter code: Large ribosomal subunit protein bL32 (68 aa).

A disordered region spans residues 1-24 (MAVPQNRVTRSRRNMRRSHDALVA).

It belongs to the bacterial ribosomal protein bL32 family.

This is Large ribosomal subunit protein bL32 from Paracoccus denitrificans (strain Pd 1222).